We begin with the raw amino-acid sequence, 742 residues long: Serine/threonine-protein kinase SKY1 (742 aa).

A disordered region spans residues 13 to 146; it reads KSAHLADTST…KDYRPGGYHP (134 aa). Polar residues predominate over residues 19 to 35; sequence DTSTDASISCEEATSSQ. The span at 56–73 shows a compositional bias: low complexity; sequence TKSKLSLALQTSKSSSSA. Positions 81 to 101 are enriched in basic and acidic residues; that stretch reads TSSKTEDFSTKSIKKKPDSGV. Low complexity predominate over residues 106-127; sequence SIQSDSGPQSDSDLDSDSSISS. Basic and acidic residues predominate over residues 128–140; sequence CDERNEESLKDYR. The Protein kinase domain maps to 158-706; it reads YILVRKLGWG…AGGLVNHPWL (549 aa). Residues 164–172 and Lys187 contribute to the ATP site; that span reads LGWGHFSTV. Catalysis depends on Asp294, which acts as the Proton acceptor. Phosphothreonine is present on residues Thr383 and Thr386. Ser388, Ser393, Ser410, Ser427, Ser432, Ser445, Ser449, and Ser453 each carry phosphoserine. A disordered region spans residues 459–491; sequence INEDSNDNNNNDNSKNKNNNNNNSNNNNNEDIM. Low complexity predominate over residues 465–489; it reads DNNNNDNSKNKNNNNNNSNNNNNED.

The protein belongs to the protein kinase superfamily. Ser/Thr protein kinase family.

The catalysed reaction is L-seryl-[protein] + ATP = O-phospho-L-seryl-[protein] + ADP + H(+). It carries out the reaction L-threonyl-[protein] + ATP = O-phospho-L-threonyl-[protein] + ADP + H(+). Constitutively active kinase, specifically and sequentially phosphorylates serine/arginine (SR)-type shuttling mRNA binding proteins in their RS dipeptide repeats. This is Serine/threonine-protein kinase SKY1 (SKY1) from Saccharomyces cerevisiae (strain ATCC 204508 / S288c) (Baker's yeast).